The sequence spans 358 residues: Neutral protease 2 homolog MEP8 (358 aa).

Positions 1-19 (MKLSSILLALAALVSPAFS) are cleaved as a signal peptide. The propeptide occupies 20 to 179 (YAISHLPRSE…EKAIKPVDKR (160 aa)). 2 disulfide bridges follow: cysteine 186–cysteine 256 and cysteine 263–cysteine 281. Residue histidine 305 coordinates Zn(2+). Glutamate 306 is an active-site residue. Histidine 309 and aspartate 320 together coordinate Zn(2+).

It belongs to the peptidase M35 family. Zn(2+) is required as a cofactor.

It localises to the secreted. The enzyme catalyses Preferential cleavage of bonds with hydrophobic residues in P1'. Also 3-Asn-|-Gln-4 and 8-Gly-|-Ser-9 bonds in insulin B chain.. Secreted metalloproteinase that allows assimilation of proteinaceous substrates. Shows high activities on basic nuclear substrates such as histone and protamine. May be involved in virulence. The protein is Neutral protease 2 homolog MEP8 (MEP8) of Coccidioides posadasii (strain C735) (Valley fever fungus).